The primary structure comprises 872 residues: Alanine--tRNA ligase (872 aa).

Zn(2+) is bound by residues H567, H571, C669, and H673.

It belongs to the class-II aminoacyl-tRNA synthetase family. It depends on Zn(2+) as a cofactor.

The protein resides in the cytoplasm. It catalyses the reaction tRNA(Ala) + L-alanine + ATP = L-alanyl-tRNA(Ala) + AMP + diphosphate. Catalyzes the attachment of alanine to tRNA(Ala) in a two-step reaction: alanine is first activated by ATP to form Ala-AMP and then transferred to the acceptor end of tRNA(Ala). Also edits incorrectly charged Ser-tRNA(Ala) and Gly-tRNA(Ala) via its editing domain. The sequence is that of Alanine--tRNA ligase from Streptococcus gordonii (strain Challis / ATCC 35105 / BCRC 15272 / CH1 / DL1 / V288).